Here is a 571-residue protein sequence, read N- to C-terminus: ATP-dependent RNA helicase RhlB (571 aa).

A Q motif motif is present at residues 9–37 (VTFSSFDLHPALIAGLESAGFTRCTPIQA). The 181-residue stretch at 40 to 220 (LPVALPGGDV…YEHMNEPEKL (181 aa)) folds into the Helicase ATP-binding domain. 53–60 (AQTGTGKT) serves as a coordination point for ATP. Residues 166 to 169 (DEAD) carry the DEAD box motif. The region spanning 231 to 393 (RVRQRIYFPS…PVTSELLTPL (163 aa)) is the Helicase C-terminal domain. The segment at 391-558 (TPLPRAPRVP…KPSGSPSLLS (168 aa)) is disordered. The span at 402–411 (EGEEADDDAG) shows a compositional bias: acidic residues. The span at 419–432 (REAREQRAAEEQRR) shows a compositional bias: basic and acidic residues. Residues 435-448 (GRGGPGGSRSGSGG) are compositionally biased toward gly residues. Over residues 449-460 (GRRDGAGADGKP) the composition is skewed to basic and acidic residues. A compositionally biased stretch (low complexity) spans 483–497 (VVAAVAAQAPSAGVA). Positions 503 to 512 (PRKRRRRRNG) are enriched in basic residues. The span at 539–558 (VVAKPVRAAAKPSGSPSLLS) shows a compositional bias: low complexity.

Belongs to the DEAD box helicase family. RhlB subfamily. In terms of assembly, component of the RNA degradosome, which is a multiprotein complex involved in RNA processing and mRNA degradation.

It localises to the cytoplasm. It carries out the reaction ATP + H2O = ADP + phosphate + H(+). DEAD-box RNA helicase involved in RNA degradation. Has RNA-dependent ATPase activity and unwinds double-stranded RNA. This Xanthomonas axonopodis pv. citri (strain 306) protein is ATP-dependent RNA helicase RhlB.